The following is a 289-amino-acid chain: ATP synthase gamma chain (289 aa).

This sequence belongs to the ATPase gamma chain family. F-type ATPases have 2 components, CF(1) - the catalytic core - and CF(0) - the membrane proton channel. CF(1) has five subunits: alpha(3), beta(3), gamma(1), delta(1), epsilon(1). CF(0) has three main subunits: a, b and c.

The protein localises to the cell inner membrane. In terms of biological role, produces ATP from ADP in the presence of a proton gradient across the membrane. The gamma chain is believed to be important in regulating ATPase activity and the flow of protons through the CF(0) complex. In Haemophilus influenzae (strain PittEE), this protein is ATP synthase gamma chain.